The sequence spans 68 residues: DNA-directed RNA polymerase subunit omega (68 aa).

This sequence belongs to the RNA polymerase subunit omega family. The RNAP catalytic core consists of 2 alpha, 1 beta, 1 beta' and 1 omega subunit. When a sigma factor is associated with the core the holoenzyme is formed, which can initiate transcription.

The catalysed reaction is RNA(n) + a ribonucleoside 5'-triphosphate = RNA(n+1) + diphosphate. Its function is as follows. Promotes RNA polymerase assembly. Latches the N- and C-terminal regions of the beta' subunit thereby facilitating its interaction with the beta and alpha subunits. The sequence is that of DNA-directed RNA polymerase subunit omega from Alkaliphilus metalliredigens (strain QYMF).